Consider the following 411-residue polypeptide: Na(+)-translocating NADH-quinone reductase subunit B (411 aa).

3 helical membrane passes run 56–76, 121–141, and 161–181; these read IMIT…YNAG, FLPI…LFAV, and ILPA…GVVI. The residue at position 228 (T228) is an FMN phosphoryl threonine. 5 consecutive transmembrane segments (helical) span residues 254–274, 284–304, 309–329, 345–365, and 368–388; these read FIPG…AAVL, IMLG…AIGS, MFGM…GMVF, LLFG…NPAF, and GIML…HFFV.

Belongs to the NqrB/RnfD family. As to quaternary structure, composed of six subunits; NqrA, NqrB, NqrC, NqrD, NqrE and NqrF. It depends on FMN as a cofactor.

The protein resides in the cell inner membrane. The catalysed reaction is a ubiquinone + n Na(+)(in) + NADH + H(+) = a ubiquinol + n Na(+)(out) + NAD(+). Its function is as follows. NQR complex catalyzes the reduction of ubiquinone-1 to ubiquinol by two successive reactions, coupled with the transport of Na(+) ions from the cytoplasm to the periplasm. NqrA to NqrE are probably involved in the second step, the conversion of ubisemiquinone to ubiquinol. This is Na(+)-translocating NADH-quinone reductase subunit B from Chromohalobacter salexigens (strain ATCC BAA-138 / DSM 3043 / CIP 106854 / NCIMB 13768 / 1H11).